Consider the following 128-residue polypeptide: 3-aminoacrylate deaminase RutC (128 aa).

It belongs to the RutC family.

The catalysed reaction is (Z)-3-aminoacrylate + H2O + H(+) = 3-oxopropanoate + NH4(+). Functionally, involved in pyrimidine catabolism. Catalyzes the deamination of 3-aminoacrylate to malonic semialdehyde, a reaction that can also occur spontaneously. RutC may facilitate the reaction and modulate the metabolic fitness, rather than catalyzing essential functions. The chain is 3-aminoacrylate deaminase RutC from Pantoea ananatis (strain LMG 20103).